The following is a 140-amino-acid chain: MKGQEGIRGEGCTDPEIKASPQMWAARFRGMRSRFSPLFSQATEMGPRVSAGWCLSGGGRKVSSLQGDFPPGGFWALSNDSALSLPPLSLPHPHPLRPPGLGVNEFTQGLHPPLHPAASVFQTCFYRKPHYCSTLRPTTT.

This is an uncharacterized protein from Homo sapiens (Human).